We begin with the raw amino-acid sequence, 492 residues long: Trk system potassium uptake protein TrkI (492 aa).

The next 10 membrane-spanning stretches (helical) occupy residues 20-40 (VLAV…LVLI), 47-67 (ALAF…SWIV), 81-101 (FVLT…PLVL), 143-163 (IMQW…LPFL), 196-216 (IYCG…MSPL), 246-266 (QLLW…VLYI), 282-302 (VQGL…WRVS), 334-354 (AWGA…GCSG), 403-423 (VVAF…GLSL), and 465-485 (WLLC…LVLL).

Belongs to the TrkH potassium transport family.

The protein localises to the cell inner membrane. Its function is as follows. Medium-affinity potassium transport system. Probably interacts with Trk system potassium uptake protein TrkA. Main K(+) transporter in osmotically adapted cells. This is Trk system potassium uptake protein TrkI (trkI) from Halomonas elongata (strain ATCC 33173 / DSM 2581 / NBRC 15536 / NCIMB 2198 / 1H9).